The chain runs to 739 residues: Probable beta-glucosidase L (739 aa).

Residues 1-17 form the signal peptide; the sequence is MQNLFLSLLAAAVTVHA. N224 carries N-linked (GlcNAc...) asparagine glycosylation. D252 is an active-site residue. The N-linked (GlcNAc...) asparagine glycan is linked to N398.

This sequence belongs to the glycosyl hydrolase 3 family.

It is found in the secreted. It catalyses the reaction Hydrolysis of terminal, non-reducing beta-D-glucosyl residues with release of beta-D-glucose.. It participates in glycan metabolism; cellulose degradation. Functionally, beta-glucosidases are one of a number of cellulolytic enzymes involved in the degradation of cellulosic biomass. Catalyzes the last step releasing glucose from the inhibitory cellobiose. The polypeptide is Probable beta-glucosidase L (bglL) (Neosartorya fischeri (strain ATCC 1020 / DSM 3700 / CBS 544.65 / FGSC A1164 / JCM 1740 / NRRL 181 / WB 181) (Aspergillus fischerianus)).